The following is a 1070-amino-acid chain: TSC22 domain family protein 1 (1070 aa).

The interval 1–98 (MHQPPESTAA…SQAQLQAQPL (98 aa)) is required for interaction with TGFBR1 and promotion of TGF-beta signaling. Disordered regions lie at residues 1-110 (MHQP…KKSG), 125-289 (ISSN…PASV), 458-487 (VTSE…VGSG), 604-637 (YSQA…STQM), and 830-858 (TSQV…AQTP). Positions 36 to 45 (GSASALNAAG) are enriched in low complexity. Pro residues predominate over residues 58–70 (FPPPSLLQPPPPA). Low complexity predominate over residues 84 to 100 (SLNLLSQAQLQAQPLAP). Acidic residues predominate over residues 133-142 (EDTESYDDLD). Basic residues predominate over residues 216-240 (HPHHLHHHHHIHHGHHLQHGHHHPS). Positions 241–250 (HVAVASASIP) are enriched in low complexity. The span at 261–271 (KLSTTGSSDSI) shows a compositional bias: polar residues. Position 263 is a phosphoserine (Ser-263). 2 stretches are compositionally biased toward low complexity: residues 272 to 289 (TPVA…PASV) and 465 to 478 (TSGS…STRS). Pro residues predominate over residues 611–622 (VQTPLPGAPPPQ). The segment covering 830–845 (TSQVSSAGPSGMPSAP) has biased composition (low complexity). Residues 849–858 (VPPQNIAQTP) are compositionally biased toward polar residues. The tract at residues 1003–1024 (LKEQIKELIEKNSQLEQENNLL) is leucine-zipper. Positions 1034–1070 (AQFQAQLQTGSPPATTQPQGTTQPPAQPASQGSGPTA) are disordered. A compositionally biased stretch (low complexity) spans 1041–1070 (QTGSPPATTQPQGTTQPPAQPASQGSGPTA).

This sequence belongs to the TSC-22/Dip/Bun family. In terms of assembly, forms homodimers. Forms heterodimers. Component of a complex composed of TSC22D1 (via N-terminus), TGFBR1 and TGFBR2; the interaction between TSC22D1 and TGFBR1 is inhibited by SMAD7 and promoted by TGFB1. Interacts with SMAD7; the interaction requires TGF-beta and the interaction is inhibited by TGFBR1. Interacts with TPT1/fortilin; interaction results in the destabilization of TSC22D1 protein and prevents TSC22D1-mediated apoptosis. Interacts with SMAD4 (via N-terminus). Interacts with ACVRL1/ALK1, ACVR1/ALK2, BMPR1A/ALK3, ACVR1B/ALK4, BMPR1B/ALK6, ACVR2A/ACTRII, and BMPR2. Interacts with SMAD6. Interacts with TFE3; the interaction is enhanced in the presence of TGF-beta. Forms a heterodimer with TSC22D4/THG1. As to quaternary structure, forms a heterodimer with TSC22D4/THG1. Interacts with histone H1-2. Interacts with GNL3.

It is found in the cytoplasm. It localises to the nucleus. The protein resides in the cell membrane. Its subcellular location is the mitochondrion. In terms of biological role, transcriptional repressor. Acts on the C-type natriuretic peptide (CNP) promoter. Acts to promote CASP3-mediated apoptosis. Positively regulates TGF-beta signaling by interacting with SMAD7 which inhibits binding of SMAD7 to TGFBR1, preventing recruitment of SMURF ubiquitin ligases to TGFBR1 and inhibiting SMURF-mediated ubiquitination and degradation of TGFBR1. Contributes to enhancement of TGF-beta signaling by binding to and modulating the transcription activator activity of SMAD4. Promotes TGF-beta-induced transcription of COL1A2; via its interaction with TFE3 at E-boxes in the gene proximal promoter. Plays a role in the repression of hematopoietic precursor cell growth. Promotes IL2 deprivation-induced apoptosis in T-lymphocytes, via repression of TSC22D3/GILZ transcription and activation of the caspase cascade. Its function is as follows. May act to negatively regulate TGFB3 signaling and thereby inhibit cell death in mammary gland cells. Functionally, positively regulates cell death in response to TGFB3 during mammary gland involution. In Pongo abelii (Sumatran orangutan), this protein is TSC22 domain family protein 1.